The chain runs to 210 residues: ATP-dependent Clp protease proteolytic subunit (210 aa).

Ser-106 functions as the Nucleophile in the catalytic mechanism. His-131 is a catalytic residue.

Belongs to the peptidase S14 family. Fourteen ClpP subunits assemble into 2 heptameric rings which stack back to back to give a disk-like structure with a central cavity, resembling the structure of eukaryotic proteasomes.

The protein localises to the cytoplasm. It catalyses the reaction Hydrolysis of proteins to small peptides in the presence of ATP and magnesium. alpha-casein is the usual test substrate. In the absence of ATP, only oligopeptides shorter than five residues are hydrolyzed (such as succinyl-Leu-Tyr-|-NHMec, and Leu-Tyr-Leu-|-Tyr-Trp, in which cleavage of the -Tyr-|-Leu- and -Tyr-|-Trp bonds also occurs).. In terms of biological role, cleaves peptides in various proteins in a process that requires ATP hydrolysis. Has a chymotrypsin-like activity. Plays a major role in the degradation of misfolded proteins. In Rhodopseudomonas palustris (strain BisB18), this protein is ATP-dependent Clp protease proteolytic subunit.